We begin with the raw amino-acid sequence, 201 residues long: UPF0301 protein RHECIAT_CH0001061 (201 aa).

It belongs to the UPF0301 (AlgH) family.

This chain is UPF0301 protein RHECIAT_CH0001061, found in Rhizobium etli (strain CIAT 652).